The chain runs to 144 residues: Superoxide dismutase [Mn] (144 aa).

The tract at residues 1–22 (GYVNGLESAEETLAENRESGDF) is disordered. The Mn(2+) site is built by H42, D124, and H128.

It belongs to the iron/manganese superoxide dismutase family. The cofactor is Mn(2+).

It carries out the reaction 2 superoxide + 2 H(+) = H2O2 + O2. In terms of biological role, destroys superoxide anion radicals which are normally produced within the cells and which are toxic to biological systems. This chain is Superoxide dismutase [Mn] (sod), found in Haloarcula hispanica.